The primary structure comprises 292 residues: Nucleotide-binding protein azo0399 (292 aa).

8-15 (GLSGSGKS) serves as a coordination point for ATP. Residue 57–60 (DMRS) participates in GTP binding.

It belongs to the RapZ-like family.

In terms of biological role, displays ATPase and GTPase activities. The polypeptide is Nucleotide-binding protein azo0399 (Azoarcus sp. (strain BH72)).